A 521-amino-acid polypeptide reads, in one-letter code: Probable tRNA (uracil-O(2)-)-methyltransferase (521 aa).

This sequence belongs to the TRM44 family.

The protein resides in the cytoplasm. The enzyme catalyses uridine(44) in tRNA(Ser) + S-adenosyl-L-methionine = 2'-O-methyluridine(44) in tRNA(Ser) + S-adenosyl-L-homocysteine + H(+). Its function is as follows. Probable adenosyl-L-methionine (AdoMet)-dependent tRNA (uracil-O(2)-)-methyltransferase. This is Probable tRNA (uracil-O(2)-)-methyltransferase (trmt44) from Drosophila melanogaster (Fruit fly).